Consider the following 581-residue polypeptide: MDFGDLLRYAKKNSDAVTKEVGQGKYYSTKYSPPKKQSKESKQLSSNIQKFLQKKEAEEAEKKRLERQKLNDLLAKRDEKSKNKIRKMLKVTKSANKSVLEDAKDYEGAIDGHEAGEGQGDDYGYVSTEANAFYDKYIEKVRDVQEDKGFTPSRPQSLKDLSGTKERVKAAITREREEAKGNTRQKSSTSTLPSSATKSKESSVARSYSTSKTLYDPNAEKLEEERKKRQEEEQRRAKIKRPAQPPPMDFQALLRLAEKKQHEPVVFEVEKKKEPERLLSAREKRELEERQRQQEQRAQRLKMRESEGKETPKSIPNRMEPNGRIPKLNQAKPANAPSDSFKKPTAPQPTKSSASSTSLSSSNSHSSASRSSVSSSRPATKSAQLTARPGATASAVGKPSSSSSRDVPSKNPYAATSLKGTVREFPPRDQSSISTLDRRKIPAAAKTRQTPSSDVQRSQGGRQFPPADVKRRKPNEPPVTKRRIYDDDDEDEYDSELDDFIDDGDCEEDISSHIRDIFGYDKRRYQGIDDDDRGMESSFAQVQREEFISKKLGMQEDLEDMRMEAAHKKQKKLVAKISSRS.

A compositionally biased stretch (low complexity) spans 26–35; sequence YYSTKYSPPK. Disordered stretches follow at residues 26-50 and 145-495; these read YYSTKYSPPKKQSKESKQLSSNIQK and QEDK…EYDS. Residues 36-76 adopt a coiled-coil conformation; sequence KQSKESKQLSSNIQKFLQKKEAEEAEKKRLERQKLNDLLAK. Over residues 162 to 181 the composition is skewed to basic and acidic residues; it reads SGTKERVKAAITREREEAKG. Polar residues-rich tracts occupy residues 182-197 and 204-213; these read NTRQKSSTSTLPSSAT and VARSYSTSKT. Composition is skewed to basic and acidic residues over residues 218–236 and 256–312; these read NAEKLEEERKKRQEEEQRR and LAEK…KETP. The stretch at 276 to 307 forms a coiled coil; sequence ERLLSAREKRELEERQRQQEQRAQRLKMRESE. Residues 352 to 376 show a composition bias toward low complexity; it reads SSASSTSLSSSNSHSSASRSSVSSS. Residues 447–461 are compositionally biased toward polar residues; the sequence is TRQTPSSDVQRSQGG. Positions 486–495 are enriched in acidic residues; the sequence is DDDDEDEYDS.

Belongs to the SPT2 family.

The polypeptide is Protein SPT2 homolog (Drosophila melanogaster (Fruit fly)).